We begin with the raw amino-acid sequence, 291 residues long: Light-independent protochlorophyllide reductase iron-sulfur ATP-binding protein (291 aa).

ATP contacts are provided by residues 10–15 (GIGKST) and lysine 39. Serine 14 is a binding site for Mg(2+). [4Fe-4S] cluster is bound by residues cysteine 95 and cysteine 129. 180–181 (NR) lines the ATP pocket.

The protein belongs to the NifH/BchL/ChlL family. As to quaternary structure, homodimer. Protochlorophyllide reductase is composed of three subunits; ChlL, ChlN and ChlB. [4Fe-4S] cluster serves as cofactor.

The protein localises to the plastid. Its subcellular location is the chloroplast. It catalyses the reaction chlorophyllide a + oxidized 2[4Fe-4S]-[ferredoxin] + 2 ADP + 2 phosphate = protochlorophyllide a + reduced 2[4Fe-4S]-[ferredoxin] + 2 ATP + 2 H2O. It functions in the pathway porphyrin-containing compound metabolism; chlorophyll biosynthesis (light-independent). Functionally, component of the dark-operative protochlorophyllide reductase (DPOR) that uses Mg-ATP and reduced ferredoxin to reduce ring D of protochlorophyllide (Pchlide) to form chlorophyllide a (Chlide). This reaction is light-independent. The L component serves as a unique electron donor to the NB-component of the complex, and binds Mg-ATP. In Pinus koraiensis (Korean pine), this protein is Light-independent protochlorophyllide reductase iron-sulfur ATP-binding protein.